The primary structure comprises 332 residues: MKKFAETPFLPTEVEIEAISDNEAKISAYPFEDGFAITLAHPLRRLLLSSSVGCAPIAVKIEGASHEFDSLRGMLEDVAIFVINLKNIKFKINGDKEQVVVEYSFNGPRDIKGEDLINSEVDVVSKDAHLATINSDCNLTFSVILQKGIGYMPSEDIRDIVGADYIPIDAFFTPVKKVVYDIEKMLVEDNPNYEKAVFRVQTNGQISPVTAFKEAVSVMYSQMSVFNKVFDLSEVAVSDSGEEPVELKELVIRIDDLNLSARSFNSLDRAGLKYLGELVLMSEVEVKNIKNLGKKSYDEIAEKLESLGYPVENTLPENVASALRRKLEQLKA.

Residues 1–227 (MKKFAETPFL…VMYSQMSVFN (227 aa)) are alpha N-terminal domain (alpha-NTD). An alpha C-terminal domain (alpha-CTD) region spans residues 248–332 (KELVIRIDDL…LRRKLEQLKA (85 aa)).

This sequence belongs to the RNA polymerase alpha chain family. Homodimer. The RNAP catalytic core consists of 2 alpha, 1 beta, 1 beta' and 1 omega subunit. When a sigma factor is associated with the core the holoenzyme is formed, which can initiate transcription.

The catalysed reaction is RNA(n) + a ribonucleoside 5'-triphosphate = RNA(n+1) + diphosphate. In terms of biological role, DNA-dependent RNA polymerase catalyzes the transcription of DNA into RNA using the four ribonucleoside triphosphates as substrates. This is DNA-directed RNA polymerase subunit alpha from Aliarcobacter butzleri (strain RM4018) (Arcobacter butzleri).